We begin with the raw amino-acid sequence, 375 residues long: Killer cell immunoglobulin-like receptor 2DL5A (375 aa).

The first 21 residues, methionine 1–threonine 21, serve as a signal peptide directing secretion. The Extracellular segment spans residues histidine 22–histidine 238. 2 Ig-like C2-type domains span residues glycine 42–serine 102 and glycine 137–serine 200. Cysteine 49 and cysteine 95 form a disulfide bridge. N-linked (GlcNAc...) asparagine glycosylation is found at asparagine 139, asparagine 173, and asparagine 218. Residues cysteine 144 and cysteine 193 are joined by a disulfide bond. Residues valine 213–threonine 233 form a disordered region. Over residues serine 219–serine 231 the composition is skewed to low complexity. Residues leucine 239 to leucine 259 traverse the membrane as a helical segment. Residues leucine 260 to isoleucine 375 are Cytoplasmic-facing. Residues alanine 334 to isoleucine 375 form a disordered region. A compositionally biased stretch (polar residues) spans arginine 355–alanine 366.

It belongs to the immunoglobulin superfamily.

Its subcellular location is the cell membrane. Receptor on natural killer (NK) cells for HLA-C alleles. Inhibits the activity of NK cells thus preventing cell lysis. The chain is Killer cell immunoglobulin-like receptor 2DL5A (KIR2DL5A) from Homo sapiens (Human).